The chain runs to 443 residues: Xaa-Pro dipeptidase (443 aa).

Mn(2+) contacts are provided by Asp246, Asp257, His339, Glu384, and Glu423.

It belongs to the peptidase M24B family. Bacterial-type prolidase subfamily. The cofactor is Mn(2+).

The enzyme catalyses Xaa-L-Pro dipeptide + H2O = an L-alpha-amino acid + L-proline. Splits dipeptides with a prolyl residue in the C-terminal position. This chain is Xaa-Pro dipeptidase, found in Klebsiella pneumoniae (strain 342).